We begin with the raw amino-acid sequence, 132 residues long: Small ribosomal subunit protein uS8 (132 aa).

Belongs to the universal ribosomal protein uS8 family. Part of the 30S ribosomal subunit. Contacts proteins S5 and S12.

Its function is as follows. One of the primary rRNA binding proteins, it binds directly to 16S rRNA central domain where it helps coordinate assembly of the platform of the 30S subunit. The polypeptide is Small ribosomal subunit protein uS8 (Exiguobacterium sibiricum (strain DSM 17290 / CCUG 55495 / CIP 109462 / JCM 13490 / 255-15)).